Reading from the N-terminus, the 208-residue chain is Inosine triphosphate pyrophosphatase (208 aa).

Position 2 is an N-acetylalanine (Ala-2). ITP is bound at residue 14–19 (TGNAKK). Residue Glu-44 participates in Mg(2+) binding. ITP-binding positions include Lys-56, 72-73 (DT), Lys-89, 149-152 (FGWD), Lys-172, and 177-178 (HR).

It belongs to the HAM1 NTPase family. In terms of assembly, homodimer. It depends on Mg(2+) as a cofactor. Mn(2+) is required as a cofactor.

It is found in the cytoplasm. It catalyses the reaction ITP + H2O = IMP + diphosphate + H(+). The enzyme catalyses dITP + H2O = dIMP + diphosphate + H(+). It carries out the reaction XTP + H2O = XMP + diphosphate + H(+). The catalysed reaction is N(6)-hydroxy-dATP + H2O = N(6)-hydroxy-dAMP + diphosphate + H(+). Pyrophosphatase that hydrolyzes the non-canonical purine nucleotides inosine triphosphate (ITP), deoxyinosine triphosphate (dITP) as well as 2'-deoxy-N-6-hydroxylaminopurine triphosphate (dHAPTP) and xanthosine 5'-triphosphate (XTP) to their respective monophosphate derivatives. The enzyme does not distinguish between the deoxy- and ribose forms. Probably excludes non-canonical purines from RNA and DNA precursor pools, thus preventing their incorporation into RNA and DNA and avoiding chromosomal lesions. The protein is Inosine triphosphate pyrophosphatase of Bos taurus (Bovine).